The sequence spans 237 residues: Sugar fermentation stimulation protein homolog (237 aa).

This sequence belongs to the SfsA family.

The polypeptide is Sugar fermentation stimulation protein homolog (Azorhizobium caulinodans (strain ATCC 43989 / DSM 5975 / JCM 20966 / LMG 6465 / NBRC 14845 / NCIMB 13405 / ORS 571)).